We begin with the raw amino-acid sequence, 521 residues long: CDP-diacylglycerol--glycerol-3-phosphate 3-phosphatidyltransferase (521 aa).

An ATP-binding site is contributed by 91–98 (ASLYLGKS). PLD phosphodiesterase domains are found at residues 177-203 (GLGL…SNDY) and 419-457 (NGWS…TRRA). Active-site residues include H182, K184, and D189.

It belongs to the CDP-alcohol phosphatidyltransferase class-II family.

It localises to the mitochondrion. It catalyses the reaction a CDP-1,2-diacyl-sn-glycerol + sn-glycerol 3-phosphate = a 1,2-diacyl-sn-glycero-3-phospho-(1'-sn-glycero-3'-phosphate) + CMP + H(+). The protein operates within phospholipid metabolism; phosphatidylglycerol biosynthesis; phosphatidylglycerol from CDP-diacylglycerol: step 1/2. Essential for the viability of mitochondrial petite mutant. Catalyzes the committed step to the synthesis of the acidic phospholipids. The polypeptide is CDP-diacylglycerol--glycerol-3-phosphate 3-phosphatidyltransferase (PGS1) (Saccharomyces pastorianus (Lager yeast)).